The chain runs to 68 residues: Copper transport protein ATOX1 (68 aa).

Positions Met1 to Ser63 constitute an HMA domain. 2 residues coordinate Cu cation: Cys12 and Cys15. The residue at position 47 (Ser47) is a Phosphoserine. Position 60 is an N6-acetyllysine (Lys60).

This sequence belongs to the ATX1 family. As to quaternary structure, homodimer. Interacts with ATP7B. Interacts with ATP7A. Interacts (via dimer form) with SLC31A1 (via C-terminal domain); this interaction improves ATOX1 stability and controls intracellular Cu(I) levels.

In terms of biological role, binds and deliver cytosolic copper to the copper ATPase proteins. May be important in cellular antioxidant defense. The protein is Copper transport protein ATOX1 of Canis lupus familiaris (Dog).